Reading from the N-terminus, the 328-residue chain is MCPAGWKLLAMLALVLVVMVWYSISREDSFYFPIPEKKEPCLQGEAESKASKLFGNYSRDQPIFLRLEDYFWVKTPSAYELPYGTKGSEDLLLRVLAITSSSIRKNIQSLRCRRCVVVGNGHRLRNSSLGDAINKYDVVIRLNNAPVAGYEGDVGSKTTMRLFYPESAHFDPKVENNPDTLLVLVAFKAMDFHWIETILSDKKRVRKGFWKQPPLIWDVNPKQIRILNPFFMEIAADKLLSLPMQQPRKIKQKPTTGLLAITLALHLCDLVHIAGFGYPDAYNKKQTIHYYEQITLKSMAGSGHNVSQEALAIKRMLEMGAVKNLTSF.

Topologically, residues 1 to 7 are cytoplasmic; the sequence is MCPAGWK. Residues 8-25 form a helical; Signal-anchor for type II membrane protein membrane-spanning segment; it reads LLAMLALVLVVMVWYSIS. Over 26–328 the chain is Lumenal; the sequence is REDSFYFPIP…MGAVKNLTSF (303 aa). 4 N-linked (GlcNAc...) asparagine glycosylation sites follow: Asn-56, Asn-126, Asn-305, and Asn-324. An intrachain disulfide couples Cys-115 to Cys-268.

It belongs to the glycosyltransferase 29 family. In terms of processing, the soluble form derives from the membrane form by proteolytic processing.

The protein localises to the golgi apparatus. Its subcellular location is the golgi stack membrane. It localises to the secreted. It carries out the reaction a beta-D-galactosyl-(1-&gt;3)-N-acetyl-beta-D-galactosaminyl derivative + CMP-N-acetyl-beta-neuraminate = an N-acetyl-alpha-neuraminyl-(2-&gt;3)-beta-D-galactosyl-(1-&gt;3)-N-acetyl-beta-D-galactosaminyl derivative + CMP + H(+). The catalysed reaction is a beta-D-galactosyl-(1-&gt;3)-N-acetyl-alpha-D-galactosaminyl derivative + CMP-N-acetyl-beta-neuraminate = an N-acetyl-alpha-neuraminyl-(2-&gt;3)-beta-D-galactosyl-(1-&gt;3)-N-acetyl-alpha-D-galactosaminyl derivative + CMP + H(+). The enzyme catalyses a beta-D-galactosyl-(1-&gt;4)-N-acetyl-beta-D-glucosaminyl derivative + CMP-N-acetyl-beta-neuraminate = an N-acetyl-alpha-neuraminyl-(2-&gt;3)-beta-D-galactosyl-(1-&gt;4)-N-acetyl-beta-D-glucosaminyl derivative + CMP + H(+). It catalyses the reaction a ganglioside GM1 (d18:1(4E)) + CMP-N-acetyl-beta-neuraminate = a ganglioside GD1a (d18:1(4E)) + CMP + H(+). It carries out the reaction a ganglioside GA1 (d18:1(4E)) + CMP-N-acetyl-beta-neuraminate = a ganglioside GM1b (d18:1(4E)) + CMP + H(+). The catalysed reaction is a ganglioside GT1c (d18:1(4E)) + CMP-N-acetyl-beta-neuraminate = a ganglioside GQ1c (d18:1(4E)) + CMP + H(+). The enzyme catalyses a neolactoside nLc4Cer + CMP-N-acetyl-beta-neuraminate = a neolactoside IV(3)-alpha-NeuAc-nLc4Cer + CMP + H(+). It catalyses the reaction a neolactoside nLc4Cer(d18:1(4E)) + CMP-N-acetyl-beta-neuraminate = a neolactoside IV(3)-alpha-NeuAc-nLc4Cer(d18:1(4E)) + CMP + H(+). It functions in the pathway protein modification; protein glycosylation. It participates in glycolipid biosynthesis. Its function is as follows. A beta-galactoside alpha2-3 sialyltransferase involved in terminal sialylation of glycoproteins and glycolipids. Catalyzes the transfer of sialic acid (N-acetyl-neuraminic acid; Neu5Ac) from the nucleotide sugar donor CMP-Neu5Ac onto acceptor Galbeta-(1-&gt;3)-GalNAc- and Galbeta-(1-&gt;4)-GlcNAc-terminated glycoconjugates through an alpha2-3 linkage. Plays a major role in hemostasis. Responsible for sialylation of plasma VWF/von Willebrand factor, preventing its recognition by asialoglycoprotein receptors (ASGPR) and subsequent clearance. Regulates ASGPR-mediated clearance of platelets. Participates in the biosynthesis of the sialyl Lewis X epitopes, both on O- and N-glycans, which are recognized by SELE/E-selectin, SELP/P-selectin and SELL/L-selectin. Essential for selectin-mediated rolling and adhesion of leukocytes during extravasation. Contributes to adhesion and transendothelial migration of neutrophils likely through terminal sialylation of CXCR2. In glycosphingolipid biosynthesis, sialylates GM1 and GA1 gangliosides to form GD1a and GM1b, respectively. Metabolizes brain c-series ganglioside GT1c forming GQ1c. Synthesizes ganglioside LM1 (IV3Neu5Ac-nLc4Cer), a major structural component of peripheral nerve myelin. This is CMP-N-acetylneuraminate-beta-galactosamide-alpha-2,3-sialyltransferase 4 (ST3GAL4) from Pan troglodytes (Chimpanzee).